We begin with the raw amino-acid sequence, 416 residues long: uncharacterized protein (416 aa).

Zn(2+) contacts are provided by His-29, Asp-31, Glu-144, His-215, and His-236.

The protein belongs to the metallo-dependent hydrolases superfamily. Peptidase M19 family. The cofactor is Zn(2+).

It catalyses the reaction an L-aminoacyl-L-amino acid + H2O = 2 an L-alpha-amino acid. This is an uncharacterized protein from Schizosaccharomyces pombe (strain 972 / ATCC 24843) (Fission yeast).